A 656-amino-acid chain; its full sequence is MAEAASLTFPDGSVRNVDAAMTGADIAESISKSLAKKAVAYAMDGSLRDLSDPVERSGKIEIITREDPRALELIRHDAAHVLAEAVQELWPGTQVTIGPVIENGFYYDFARNEPFTLDDLPVIEKKMREIVDRNKRFSKEVWPRDKAKKVFADKGESYKVELIDAIPEDQDLKIYFQGDWFDLCRGPHMASTGQIGKAFKLMKVAGAYWRGDSNRPMLTRIYGTAWADQQQLDSYLQMLEEAEKRDHRRLGREMDLFHFQEEGPGVVFWHAKGWRMFQNLVSYMRRRLDGVYQEVNAPQVLDHSLWQTSGHWGWYKENMFKVECADEEAEDKRTFALKPMNCPGHVQIFKHGLKSYRDLPIRLAEFGAVHRYEPSGALHGLMRVRGFTQDDAHIFCTEDQLAEECLKINDLILSTYADFGFEEIQVFFSTRPEKRVGSDALWDHAEEIMGGVLEQIAERSGGRIKTAINPGDGAFYGPKFDYVLKDAIGRQWQCGTTQVDFNLPERFGAFYIDKDSEKKQPVMIHRAICGSMERFLGILIENYAGHFPLWFAPLQVVVATITSDADDYARQVTQQLKAAGLTAEADLRNEKINYKVREHSLAKVPVILVCGKREAEEGSVNIRRLGSRDQASLLLAEAIAQLIDEATPPDIRRAKA.

One can recognise a TGS domain in the interval 1–64 (MAEAASLTFP…ERSGKIEIIT (64 aa)). The segment at 246–548 (DHRRLGREMD…LIENYAGHFP (303 aa)) is catalytic. Residues C342, H393, and H525 each contribute to the Zn(2+) site.

It belongs to the class-II aminoacyl-tRNA synthetase family. Homodimer. Zn(2+) serves as cofactor.

The protein localises to the cytoplasm. The catalysed reaction is tRNA(Thr) + L-threonine + ATP = L-threonyl-tRNA(Thr) + AMP + diphosphate + H(+). Its function is as follows. Catalyzes the attachment of threonine to tRNA(Thr) in a two-step reaction: L-threonine is first activated by ATP to form Thr-AMP and then transferred to the acceptor end of tRNA(Thr). Also edits incorrectly charged L-seryl-tRNA(Thr). The protein is Threonine--tRNA ligase of Chelativorans sp. (strain BNC1).